A 184-amino-acid polypeptide reads, in one-letter code: Peptide deformylase (184 aa).

Fe cation-binding residues include Cys-111 and His-154. Glu-155 is a catalytic residue. His-158 is a Fe cation binding site.

It belongs to the polypeptide deformylase family. Fe(2+) is required as a cofactor.

The enzyme catalyses N-terminal N-formyl-L-methionyl-[peptide] + H2O = N-terminal L-methionyl-[peptide] + formate. Its function is as follows. Removes the formyl group from the N-terminal Met of newly synthesized proteins. Requires at least a dipeptide for an efficient rate of reaction. N-terminal L-methionine is a prerequisite for activity but the enzyme has broad specificity at other positions. This Pediococcus pentosaceus (strain ATCC 25745 / CCUG 21536 / LMG 10740 / 183-1w) protein is Peptide deformylase.